A 97-amino-acid chain; its full sequence is HssA/B-like protein 44 (97 aa).

Disordered regions lie at residues 1–22 (MTLF…SSIA) and 62–97 (ASTS…CGCN). The segment covering 72-84 (RPGRGHGGPHGHG) has biased composition (basic residues). Positions 85 to 97 (RGGSGSGSSCGCN) are enriched in gly residues.

The protein belongs to the hssA/B family.

This Dictyostelium discoideum (Social amoeba) protein is HssA/B-like protein 44 (hssl44).